The primary structure comprises 640 residues: PAN2-PAN3 deadenylation complex subunit PAN3 (640 aa).

Residues 17–46 form a C3H1-type zinc finger; sequence ENKDILCRNVLIYGHCRYEDQGCTYNHDQN. 2 stretches are compositionally biased toward polar residues: residues 43-53 and 63-87; these read HDQNKNSSQPE and DSPS…SQAA. The segment at 43-101 is disordered; it reads HDQNKNSSQPEAPSKKMFNVDSPSFTPSGQSTVLPKKTTLSSQAASAAPFTPRGGGTPT. The pseudokinase domain stretch occupies residues 237–498; sequence QVIPNSGLPQ…TIEHFMTGIA (262 aa). ATP contacts are provided by residues N263, R288, 338–345, and 397–398; these read DFHPLSKT and SK. Residues 499-537 are a coiled coil; sequence SQMTTFFDLALQDNDEKLFHLAREVENGRIARSLMKLLT. The tract at residues 538-640 is knob domain; that stretch reads ILERGDYDGV…SKTGAPGANT (103 aa).

Belongs to the protein kinase superfamily. PAN3 family. Homodimer. Forms a heterotrimer with a catalytic subunit PAN2 to form the poly(A)-nuclease (PAN) deadenylation complex. Interacts (via PAM-2 motif) with poly(A)-binding protein PAB1 (via PABC domain), conferring substrate specificity of the enzyme complex.

The protein resides in the cytoplasm. In terms of biological role, regulatory subunit of the poly(A)-nuclease (PAN) deadenylation complex, one of two cytoplasmic mRNA deadenylases involved in mRNA turnover. PAN specifically shortens poly(A) tails of RNA and the activity is stimulated by poly(A)-binding protein PAB1. PAN deadenylation is followed by rapid degradation of the shortened mRNA tails by the CCR4-NOT complex. Deadenylated mRNAs are then degraded by two alternative mechanisms, namely exosome-mediated 3'-5' exonucleolytic degradation, or deadenylation-dependent mRNA decaping and subsequent 5'-3' exonucleolytic degradation by XRN1. May also be involved in post-transcriptional maturation of mRNA poly(A) tails. PAN3 acts as a positive regulator for PAN activity, recruiting the catalytic subunit PAN2 to mRNA via its interaction with RNA and with PAB1. The sequence is that of PAN2-PAN3 deadenylation complex subunit PAN3 from Chaetomium thermophilum (strain DSM 1495 / CBS 144.50 / IMI 039719) (Thermochaetoides thermophila).